The following is a 583-amino-acid chain: uncharacterized protein (583 aa).

Residue 24-140 (ILADIDDEQL…SAMLRAMARM (117 aa)) coordinates a nucleoside 3',5'-cyclic phosphate. In terms of domain architecture, PNPLA spans 309–469 (LVMAGGGARG…LNNLPANVMC (161 aa)). Positions 313-318 (GGGARG) match the GXGXXG motif. The GXSXG motif lies at 340 to 344 (GTSSG). S342 serves as the catalytic Nucleophile. The active-site Proton acceptor is the D456. The short motif at 456-458 (DGG) is the DGA/G element.

This sequence belongs to the NTE family.

This is an uncharacterized protein from Mycobacterium tuberculosis (strain CDC 1551 / Oshkosh).